A 130-amino-acid chain; its full sequence is MRMRFVVMVILLPALMMSGSECRSSCRLTNISITVESEECGSCITIDTTACAGLCKTQESVYRSPLMLSYQNTCNFREWTYETYEFKGCPARADSIFTYPVALSCECSKCNSDITDCGVLSQQTLGCNAH.

The N-terminal stretch at 1-18 (MRMRFVVMVILLPALMMS) is a signal peptide. 5 disulfides stabilise this stretch: cysteine 26–cysteine 74, cysteine 40–cysteine 89, cysteine 51–cysteine 105, cysteine 55–cysteine 107, and cysteine 110–cysteine 117. Asparagine 30 carries an N-linked (GlcNAc...) asparagine glycan.

The protein belongs to the glycoprotein hormones subunit beta family. Heterodimer of an alpha and a beta chain.

The protein localises to the secreted. Functionally, involved in gametogenesis and steroidogenesis. The sequence is that of Gonadotropin subunit beta-1 (cgba) from Carassius auratus (Goldfish).